A 291-amino-acid chain; its full sequence is Potassium-transporting ATPase subunit beta (291 aa).

Residues 1–36 (MAALQEKKSCSQRMEEFRHYCWNPDTGQMLGRTLSR) lie on the Cytoplasmic side of the membrane. Residues 37 to 57 (WVWISLYYVAFYVVMTGLFAL) traverse the membrane as a helical; Signal-anchor for type II membrane protein segment. Residues 58–291 (CIYVLMQTID…KVEFKLKIQK (234 aa)) are Extracellular-facing. N-linked (GlcNAc...) asparagine glycans are attached at residues Asn-99, Asn-103, Asn-130, Asn-146, and Asn-161. An intrachain disulfide couples Cys-131 to Cys-152. A disulfide bridge links Cys-162 with Cys-178. Residues Asn-193 and Asn-222 are each glycosylated (N-linked (GlcNAc...) asparagine). The segment at 194 to 291 (STPPRVDCTF…KVEFKLKIQK (98 aa)) is immunoglobulin-like. A disulfide bond links Cys-201 and Cys-263.

The protein belongs to the X(+)/potassium ATPases subunit beta family. The ATPase pump is composed of two subunits: alpha (catalytic) and beta (regulatory). Interacts with alpha subunit ATP12A; this interaction is required for the formation of a functionally active pump and targeting at the plasma membrane. Interacts (via N-terminus) with alpha subunit ATP4A (via the P-domain). Post-translationally, N-glycosylation is necessary for assembly and functional expression of the pump at the plasma membrane.

It localises to the apical cell membrane. The protein resides in the cell membrane. Functionally, the beta subunit of the gastric H(+)/K(+) ATPase pump which transports H(+) ions in exchange for K(+) ions across the apical membrane of parietal cells. Plays a structural and regulatory role in the assembly and membrane targeting of a functionally active pump. Within a transport cycle, the transfer of a H(+) ion across the membrane is coupled to ATP hydrolysis and is associated with a transient phosphorylation of the alpha subunit that shifts the pump conformation from inward-facing (E1) to outward-facing state (E2). Interacts with the phosphorylation domain of the alpha subunit and functions as a ratchet, stabilizing the lumenal-open E2 conformation and preventing the reverse reaction of the transport cycle. The protein is Potassium-transporting ATPase subunit beta (ATP4B) of Oryctolagus cuniculus (Rabbit).